A 118-amino-acid chain; its full sequence is MTLEYIYIFIFFWGAFFISCLLIFLSYFLVYQESDIEKNSAYECGFQPFEDTRSKFNVRYYLIAILFMIFDLEIMYLFPWSISISTGSFFGVWAIFLFLIILTVGFIYEWQKGALEWD.

The next 3 membrane-spanning stretches (helical) occupy residues 5-25 (YIYIFIFFWGAFFISCLLIFL), 62-82 (LIAILFMIFDLEIMYLFPWSI), and 87-107 (GSFFGVWAIFLFLIILTVGFI).

The protein belongs to the complex I subunit 3 family.

The protein localises to the mitochondrion membrane. It catalyses the reaction a ubiquinone + NADH + 5 H(+)(in) = a ubiquinol + NAD(+) + 4 H(+)(out). Functionally, core subunit of the mitochondrial membrane respiratory chain NADH dehydrogenase (Complex I) that is believed to belong to the minimal assembly required for catalysis. Complex I functions in the transfer of electrons from NADH to the respiratory chain. The immediate electron acceptor for the enzyme is believed to be ubiquinone. This is NADH-ubiquinone oxidoreductase chain 3 (ND3) from Acanthamoeba castellanii (Amoeba).